Here is a 439-residue protein sequence, read N- to C-terminus: GTPase Der (439 aa).

EngA-type G domains follow at residues 4–169 (AMVS…PQEE) and 177–352 (IKIA…EEYN). GTP contacts are provided by residues 10–17 (GRPNVGKS), 57–61 (DTGGL), 120–123 (NKVD), 183–190 (GKPNVGKS), 230–234 (DTAGI), and 295–298 (NKWD). Positions 353-437 (KRITTGLLNN…PIVISTKKRG (85 aa)) constitute a KH-like domain.

This sequence belongs to the TRAFAC class TrmE-Era-EngA-EngB-Septin-like GTPase superfamily. EngA (Der) GTPase family. In terms of assembly, associates with the 50S ribosomal subunit.

In terms of biological role, GTPase that plays an essential role in the late steps of ribosome biogenesis. In Thermoanaerobacter sp. (strain X514), this protein is GTPase Der.